Reading from the N-terminus, the 96-residue chain is Large ribosomal subunit protein bL27 (96 aa).

A propeptide spanning residues methionine 1–phenylalanine 9 is cleaved from the precursor. Residues methionine 1–arginine 33 form a disordered region. Residues arginine 22–arginine 33 show a composition bias toward basic and acidic residues.

This sequence belongs to the bacterial ribosomal protein bL27 family. Post-translationally, the N-terminus is cleaved by ribosomal processing cysteine protease Prp.

The sequence is that of Large ribosomal subunit protein bL27 from Listeria innocua serovar 6a (strain ATCC BAA-680 / CLIP 11262).